Reading from the N-terminus, the 306-residue chain is D-alanine--D-alanine ligase (306 aa).

Residues 104-303 (KMLWKAFGLP…FEQLVVKILE (200 aa)) form the ATP-grasp domain. 134–189 (VAKLGLPLMVKPSLEGSSVGLTKVKAVEELKSAVEYALKFDNTILIEEWLAGDELT) contributes to the ATP binding site. Mg(2+) contacts are provided by aspartate 257, glutamate 270, and asparagine 272.

It belongs to the D-alanine--D-alanine ligase family. Requires Mg(2+) as cofactor. It depends on Mn(2+) as a cofactor.

It localises to the cytoplasm. The catalysed reaction is 2 D-alanine + ATP = D-alanyl-D-alanine + ADP + phosphate + H(+). Its pathway is cell wall biogenesis; peptidoglycan biosynthesis. Cell wall formation. This is D-alanine--D-alanine ligase from Haemophilus influenzae (strain 86-028NP).